An 88-amino-acid polypeptide reads, in one-letter code: U18-hexatoxin-Hi1a (88 aa).

An N-terminal signal peptide occupies residues 1–17 (MRIYSLLILSFLLLASA). Residues 18–47 (VLINSAEMPRSEKSLLYSIMQGREDSEEGR) constitute a propeptide that is removed on maturation. 4 disulfide bridges follow: C48-C63, C55-C69, C62-C81, and C71-C79.

The protein belongs to the neurotoxin 07 (Beta/delta-agtx) family. 02 (aga-3) subfamily. In terms of tissue distribution, expressed by the venom gland.

The protein resides in the secreted. Its function is as follows. Weak insecticidal toxin with probable ion channel impairing activity. In vivo, induces paralysis when injected into sheep blowflies (L.cuprina). Shows weak toxicity, since it is only toxic at high doses, and flies recover within 24 hours. In Hadronyche infensa (Fraser island funnel-web spider), this protein is U18-hexatoxin-Hi1a.